A 192-amino-acid chain; its full sequence is dTTP/UTP pyrophosphatase (192 aa).

Aspartate 71 functions as the Proton acceptor in the catalytic mechanism.

It belongs to the Maf family. YhdE subfamily. It depends on a divalent metal cation as a cofactor.

The protein localises to the cytoplasm. The catalysed reaction is dTTP + H2O = dTMP + diphosphate + H(+). It carries out the reaction UTP + H2O = UMP + diphosphate + H(+). Its function is as follows. Nucleoside triphosphate pyrophosphatase that hydrolyzes dTTP and UTP. May have a dual role in cell division arrest and in preventing the incorporation of modified nucleotides into cellular nucleic acids. The chain is dTTP/UTP pyrophosphatase from Clostridium kluyveri (strain NBRC 12016).